Here is a 348-residue protein sequence, read N- to C-terminus: Mannonate dehydratase (348 aa).

The protein belongs to the mannonate dehydratase family. It depends on Fe(2+) as a cofactor. The cofactor is Mn(2+).

It carries out the reaction D-mannonate = 2-dehydro-3-deoxy-D-gluconate + H2O. The protein operates within carbohydrate metabolism; pentose and glucuronate interconversion. Functionally, catalyzes the dehydration of D-mannonate. The sequence is that of Mannonate dehydratase from Streptococcus agalactiae serotype III (strain NEM316).